The sequence spans 376 residues: Glucose-1-phosphate adenylyltransferase (376 aa).

Residues tyrosine 101, glycine 166, glutamate 181–lysine 182, and serine 192 each bind alpha-D-glucose 1-phosphate.

The protein belongs to the bacterial/plant glucose-1-phosphate adenylyltransferase family. As to quaternary structure, homotetramer.

It catalyses the reaction alpha-D-glucose 1-phosphate + ATP + H(+) = ADP-alpha-D-glucose + diphosphate. Its pathway is glycan biosynthesis; glycogen biosynthesis. Involved in the biosynthesis of ADP-glucose, a building block required for the elongation reactions to produce glycogen. Catalyzes the reaction between ATP and alpha-D-glucose 1-phosphate (G1P) to produce pyrophosphate and ADP-Glc. This Bacillus thuringiensis (strain Al Hakam) protein is Glucose-1-phosphate adenylyltransferase.